Here is a 427-residue protein sequence, read N- to C-terminus: Glutamate-1-semialdehyde 2,1-aminomutase (427 aa).

K265 carries the N6-(pyridoxal phosphate)lysine modification.

It belongs to the class-III pyridoxal-phosphate-dependent aminotransferase family. HemL subfamily. As to quaternary structure, homodimer. Pyridoxal 5'-phosphate serves as cofactor.

The protein localises to the cytoplasm. It catalyses the reaction (S)-4-amino-5-oxopentanoate = 5-aminolevulinate. It functions in the pathway porphyrin-containing compound metabolism; protoporphyrin-IX biosynthesis; 5-aminolevulinate from L-glutamyl-tRNA(Glu): step 2/2. The chain is Glutamate-1-semialdehyde 2,1-aminomutase from Pseudomonas savastanoi pv. phaseolicola (strain 1448A / Race 6) (Pseudomonas syringae pv. phaseolicola (strain 1448A / Race 6)).